The chain runs to 567 residues: Type II secretion system protein E (567 aa).

325-332 (GPTGSGKT) contacts ATP.

Belongs to the GSP E family. Forms homooligomers; most probably hexamers. Interacts with XpsL/GspL.

It is found in the cell inner membrane. The enzyme catalyses ATP + H2O + cellular proteinSide 1 = ADP + phosphate + cellular proteinSide 2.. ATPase component of the type II secretion system required for the energy-dependent secretion of extracellular factors such as proteases and toxins from the periplasm. Acts as a molecular motor to provide the energy that is required for assembly of the pseudopilus and the extrusion of substrates generated in the cytoplasm. The chain is Type II secretion system protein E (xpsE) from Xanthomonas campestris pv. campestris (strain ATCC 33913 / DSM 3586 / NCPPB 528 / LMG 568 / P 25).